Here is a 431-residue protein sequence, read N- to C-terminus: Ribosomal protein uS12 methylthiotransferase RimO (431 aa).

The MTTase N-terminal domain maps to 4 to 120 (HKLFLLSLGC…ILAALGAAYH (117 aa)). Residues C13, C49, C83, C144, C148, and C151 each contribute to the [4Fe-4S] cluster site. The Radical SAM core domain occupies 130–359 (LTPPHYTYLK…MELQESVSQD (230 aa)). Residues 362-429 (RDFEGKEITV…PFDLVGEVIG (68 aa)) enclose the TRAM domain.

It belongs to the methylthiotransferase family. RimO subfamily. The cofactor is [4Fe-4S] cluster.

Its subcellular location is the cytoplasm. It catalyses the reaction L-aspartate(89)-[ribosomal protein uS12]-hydrogen + (sulfur carrier)-SH + AH2 + 2 S-adenosyl-L-methionine = 3-methylsulfanyl-L-aspartate(89)-[ribosomal protein uS12]-hydrogen + (sulfur carrier)-H + 5'-deoxyadenosine + L-methionine + A + S-adenosyl-L-homocysteine + 2 H(+). In terms of biological role, catalyzes the methylthiolation of an aspartic acid residue of ribosomal protein uS12. The chain is Ribosomal protein uS12 methylthiotransferase RimO from Pelodictyon phaeoclathratiforme (strain DSM 5477 / BU-1).